The chain runs to 98 residues: NADH-ubiquinone oxidoreductase chain 4L (98 aa).

The next 3 helical transmembrane spans lie at M1–L21, S29–L49, and I61–V81.

It belongs to the complex I subunit 4L family. Core subunit of respiratory chain NADH dehydrogenase (Complex I) which is composed of 45 different subunits.

Its subcellular location is the mitochondrion inner membrane. The enzyme catalyses a ubiquinone + NADH + 5 H(+)(in) = a ubiquinol + NAD(+) + 4 H(+)(out). Its function is as follows. Core subunit of the mitochondrial membrane respiratory chain NADH dehydrogenase (Complex I) which catalyzes electron transfer from NADH through the respiratory chain, using ubiquinone as an electron acceptor. Part of the enzyme membrane arm which is embedded in the lipid bilayer and involved in proton translocation. The protein is NADH-ubiquinone oxidoreductase chain 4L (MT-ND4L) of Rhinolophus monoceros (Formosan lesser horseshoe bat).